The following is a 291-amino-acid chain: Light-independent protochlorophyllide reductase iron-sulfur ATP-binding protein (291 aa).

Residues 10–15 (GIGKST) and K39 contribute to the ATP site. Residue S14 coordinates Mg(2+). The [4Fe-4S] cluster site is built by C95 and C129. An ATP-binding site is contributed by 180–181 (NR).

Belongs to the NifH/BchL/ChlL family. Homodimer. Protochlorophyllide reductase is composed of three subunits; ChlL, ChlN and ChlB. It depends on [4Fe-4S] cluster as a cofactor.

The protein localises to the plastid. It localises to the chloroplast. It carries out the reaction chlorophyllide a + oxidized 2[4Fe-4S]-[ferredoxin] + 2 ADP + 2 phosphate = protochlorophyllide a + reduced 2[4Fe-4S]-[ferredoxin] + 2 ATP + 2 H2O. It participates in porphyrin-containing compound metabolism; chlorophyll biosynthesis (light-independent). Functionally, component of the dark-operative protochlorophyllide reductase (DPOR) that uses Mg-ATP and reduced ferredoxin to reduce ring D of protochlorophyllide (Pchlide) to form chlorophyllide a (Chlide). This reaction is light-independent. The L component serves as a unique electron donor to the NB-component of the complex, and binds Mg-ATP. The sequence is that of Light-independent protochlorophyllide reductase iron-sulfur ATP-binding protein from Pinus contorta (Shore pine).